The primary structure comprises 195 residues: dCTP deaminase (195 aa).

Residues 109–114, aspartate 127, 135–137, tyrosine 170, lysine 177, and glutamine 181 contribute to the dCTP site; these read RSSLAR and TLE. Glutamate 137 serves as the catalytic Proton donor/acceptor.

It belongs to the dCTP deaminase family. In terms of assembly, homotrimer.

The catalysed reaction is dCTP + H2O + H(+) = dUTP + NH4(+). It participates in pyrimidine metabolism; dUMP biosynthesis; dUMP from dCTP (dUTP route): step 1/2. Its function is as follows. Catalyzes the deamination of dCTP to dUTP. This Rhodospirillum rubrum (strain ATCC 11170 / ATH 1.1.1 / DSM 467 / LMG 4362 / NCIMB 8255 / S1) protein is dCTP deaminase.